Reading from the N-terminus, the 459-residue chain is MHKEIAKELLLLAGGKNNIISISHCTTRLRFDVKDETKIDIHAIENLQGVQGTFFRYGLFQIIFGAGVVNKIYKEVVHVWETAPSEEPVHQKKASRKLNPAAAFAKTLSDIFVPIIPAITASGLLMGLIGMIKVFHWFAAGSPWIKMLDLVSSTAFILLPILVGFSAARQFGSNPYLGAVIAGLLTHPDLLDPSMLGSKTPSSLDIWGLHIPMMGYQGSMIPILLSVFVMSKIEKLLKSIVPKSLDVVIIPFITVMVTGCLALIVMNPAASIIGQIMTQSIVYIYDHAGIAAGALFGGIYSTIVLSGLHHSFYAIEATLLANPHVGVNFLVPIWSMANVAQGGAGLAVFLKTKQSSLKKIALPASLTAFLGIVEPIVFGVNLKLIRPFIGAAIGGAIGGAYVVAVQVVANSYGLTGIPMISIVLPFGAANFVHYMIGFLIAAVSAFIATLFLGFKEETE.

Residues 1 to 86 (MHKEIAKELL…VHVWETAPSE (86 aa)) enclose the PTS EIIB type-1 domain. The Phosphocysteine intermediate; for EIIB activity role is filled by cysteine 25. One can recognise a PTS EIIC type-1 domain in the interval 106 to 459 (KTLSDIFVPI…LFLGFKEETE (354 aa)). The next 11 membrane-spanning stretches (helical) occupy residues 111–131 (IFVPIIPAITASGLLMGLIGM), 147–167 (MLDLVSSTAFILLPILVGFSA), 177–197 (LGAVIAGLLTHPDLLDPSMLG), 209–229 (LHIPMMGYQGSMIPILLSVFV), 245–265 (LDVVIIPFITVMVTGCLALIV), 288–308 (AGIAAGALFGGIYSTIVLSGL), 329–349 (FLVPIWSMANVAQGGAGLAVF), 360–380 (IALPASLTAFLGIVEPIVFGV), 388–408 (FIGAAIGGAIGGAYVVAVQVV), 412–432 (YGLTGIPMISIVLPFGAANFV), and 434–454 (YMIGFLIAAVSAFIATLFLGF).

Its subcellular location is the cell membrane. Its function is as follows. The phosphoenolpyruvate-dependent sugar phosphotransferase system (sugar PTS), a major carbohydrate active -transport system, catalyzes the phosphorylation of incoming sugar substrates concomitantly with their translocation across the cell membrane. This system may be involved in sucrose transport. The EIIB domain is mainly phosphorylated by the EIIA domains of GamP and PtsA/YpqE. In terms of biological role, negatively regulates SacY activity by catalyzing its phosphorylation on 'His-99'. The chain is Probable PTS system sucrose-specific EIIBC component (sacX) from Bacillus subtilis (strain 168).